The primary structure comprises 213 residues: Peptidyl-tRNA hydrolase (213 aa).

Residue tyrosine 15 participates in tRNA binding. Residue histidine 20 is the Proton acceptor of the active site. TRNA-binding residues include phenylalanine 66, asparagine 68, and asparagine 114. The tract at residues 187 to 213 (HTTKPPRPKPPRPAAAPVDAPAAPGDQ) is disordered. Positions 201 to 213 (AAPVDAPAAPGDQ) are enriched in low complexity.

This sequence belongs to the PTH family. In terms of assembly, monomer.

The protein resides in the cytoplasm. It catalyses the reaction an N-acyl-L-alpha-aminoacyl-tRNA + H2O = an N-acyl-L-amino acid + a tRNA + H(+). Functionally, hydrolyzes ribosome-free peptidyl-tRNAs (with 1 or more amino acids incorporated), which drop off the ribosome during protein synthesis, or as a result of ribosome stalling. Its function is as follows. Catalyzes the release of premature peptidyl moieties from peptidyl-tRNA molecules trapped in stalled 50S ribosomal subunits, and thus maintains levels of free tRNAs and 50S ribosomes. The chain is Peptidyl-tRNA hydrolase from Paracidovorax citrulli (strain AAC00-1) (Acidovorax citrulli).